The chain runs to 156 residues: Protein-export protein SecB (156 aa).

The protein belongs to the SecB family. Homotetramer, a dimer of dimers. One homotetramer interacts with 1 SecA dimer.

It is found in the cytoplasm. Functionally, one of the proteins required for the normal export of preproteins out of the cell cytoplasm. It is a molecular chaperone that binds to a subset of precursor proteins, maintaining them in a translocation-competent state. It also specifically binds to its receptor SecA. This chain is Protein-export protein SecB, found in Serratia proteamaculans (strain 568).